The sequence spans 792 residues: Zinc finger protein 606 (792 aa).

One can recognise a KRAB domain in the interval 62-133 (VTFKDVAVDF…EQACPQRTCP (72 aa)). The C2H2-type 1; degenerate zinc-finger motif lies at 289–311 (FKCTDAVKSFNHIIHFGDHKGIH). Residues 317 to 344 (YEYKECHQIFNQSPSFNEHPRLHVGENQ) form a C2H2-type 2; degenerate zinc finger. Residues 400–422 (YDYNECGTSFIWSSYLIQHKKTH) form a C2H2-type 3; degenerate zinc finger. 13 C2H2-type zinc fingers span residues 428-450 (YECD…ERTH), 456-478 (YECN…KRIH), 484-506 (YVCN…QRTH), 512-534 (FECT…MRMH), 540-562 (FKCD…ERTH), 568-590 (YKCT…QRTH), 596-618 (YNCQ…EIIH), 624-646 (YECN…QRTH), 652-674 (YECN…RRIH), 680-702 (YKCN…RRTH), 708-730 (YRCN…LRNH), 736-758 (YKCN…QRMH), and 764-786 (FICS…QRNH).

This sequence belongs to the krueppel C2H2-type zinc-finger protein family. In terms of tissue distribution, widely expressed in adult and fetal tissues.

The protein localises to the nucleus. In terms of biological role, may act as a transcriptional repressor. The polypeptide is Zinc finger protein 606 (ZNF606) (Homo sapiens (Human)).